The primary structure comprises 628 residues: DNA-directed RNA polymerase subunit beta' (628 aa).

Residues C70, C72, C85, and C88 each contribute to the Zn(2+) site. Mg(2+)-binding residues include D472, D474, and D476.

This sequence belongs to the RNA polymerase beta' chain family. RpoC1 subfamily. In terms of assembly, in plastids the minimal PEP RNA polymerase catalytic core is composed of four subunits: alpha, beta, beta', and beta''. When a (nuclear-encoded) sigma factor is associated with the core the holoenzyme is formed, which can initiate transcription. Mg(2+) is required as a cofactor. It depends on Zn(2+) as a cofactor.

It is found in the plastid. The protein resides in the chloroplast. It catalyses the reaction RNA(n) + a ribonucleoside 5'-triphosphate = RNA(n+1) + diphosphate. In terms of biological role, DNA-dependent RNA polymerase catalyzes the transcription of DNA into RNA using the four ribonucleoside triphosphates as substrates. The chain is DNA-directed RNA polymerase subunit beta' from Gracilaria tenuistipitata var. liui (Red alga).